A 260-amino-acid chain; its full sequence is Putative cysteine-rich repeat secretory protein 23 (260 aa).

The N-terminal stretch at 1 to 31 (MSSSFVYKSLFLVPILAVVAMQLSFVQSVLS) is a signal peptide. 2 consecutive Gnk2-homologous domains span residues 38–136 (YLHH…NISY) and 142–254 (LPEQ…LYLF).

This sequence belongs to the cysteine-rich repeat secretory protein family.

The protein resides in the secreted. This is Putative cysteine-rich repeat secretory protein 23 (CRRSP23) from Arabidopsis thaliana (Mouse-ear cress).